The sequence spans 262 residues: Cutinase 2 (262 aa).

Tyr61 lines the poly(ethylene terephthalate) pocket. Ser131 (nucleophile) is an active-site residue. The poly(ethylene terephthalate) site is built by Met132 and Trp156. Catalysis depends on charge relay system residues Asp177 and His209. Cys242 and Cys260 are disulfide-bonded.

It belongs to the AB hydrolase superfamily.

Its subcellular location is the secreted. The protein resides in the periplasm. It carries out the reaction a butanoate ester + H2O = an aliphatic alcohol + butanoate + H(+). The enzyme catalyses an acetyl ester + H2O = an aliphatic alcohol + acetate + H(+). The catalysed reaction is (ethylene terephthalate)(n) + H2O = (ethylene terephthalate)(n-1) + 4-[(2-hydroxyethoxy)carbonyl]benzoate + H(+). It catalyses the reaction cutin + H2O = cutin monomers.. Its function is as follows. Catalyzes the hydrolysis of cutin, a polyester that forms the structure of plant cuticle. Shows esterase activity towards p-nitrophenol-linked aliphatic esters (pNP-aliphatic esters). Capable of degrading the plastic poly(ethylene terephthalate) (PET), the most abundant polyester plastic in the world. Capable of degrading the bioplastic poly(lactic acid) (PLLA). In Thermobifida cellulosilytica, this protein is Cutinase 2.